Reading from the N-terminus, the 431-residue chain is Adenylosuccinate synthetase (431 aa).

GTP is bound by residues 13–19 and 41–43; these read GDEGKGK and GHT. Aspartate 14 functions as the Proton acceptor in the catalytic mechanism. Mg(2+)-binding residues include aspartate 14 and glycine 41. IMP-binding positions include 14-17, 39-42, threonine 130, arginine 144, glutamine 225, threonine 240, and arginine 304; these read DEGK and NAGH. Histidine 42 acts as the Proton donor in catalysis. 300–306 contacts substrate; the sequence is ATTHRPR. GTP contacts are provided by residues arginine 306, 332 to 334, and 414 to 416; these read KLD and STG.

It belongs to the adenylosuccinate synthetase family. In terms of assembly, homodimer. Requires Mg(2+) as cofactor.

Its subcellular location is the cytoplasm. The catalysed reaction is IMP + L-aspartate + GTP = N(6)-(1,2-dicarboxyethyl)-AMP + GDP + phosphate + 2 H(+). It functions in the pathway purine metabolism; AMP biosynthesis via de novo pathway; AMP from IMP: step 1/2. Plays an important role in the de novo pathway of purine nucleotide biosynthesis. Catalyzes the first committed step in the biosynthesis of AMP from IMP. The sequence is that of Adenylosuccinate synthetase from Nitrosococcus oceani (strain ATCC 19707 / BCRC 17464 / JCM 30415 / NCIMB 11848 / C-107).